The following is a 578-amino-acid chain: SUMOylated effector protein AmpA (578 aa).

Residues 144–169 are disordered; sequence PQTVDPSVVESATGSGVDTQEEQEID. A run of 3 repeats spans residues 180–272, 304–425, and 428–557. Positions 180–557 are 3 X approximate tandem repeats; sequence TEEQEVILEE…VEADAGMQQE (378 aa). The segment at 516-578 is disordered; it reads VSVEADAGMQ…DPDDEDVLSY (63 aa).

In terms of processing, polysumoylated during infection on at least two lysine residues, in the N- and C-terminal section. SUMO2/3 modification of AmpA throughout the infection cycle is likely critical for bacterial intracellular survival, while terminal SUMO1 conjugation of AmpA may promote a late-stage infection cycle event. Only a small portion of the available AmpA pool is actually SUMOylated at any given time.

The protein localises to the secreted. It is found in the host membrane. It localises to the host cytoplasm. The protein resides in the host cytosol. In terms of biological role, secreted effector that hijacks host cell SUMOylation during A.phagocytophilum infection and is important for the pathogen's intracellular survival. The polypeptide is SUMOylated effector protein AmpA (Anaplasma phagocytophilum (strain HZ)).